The following is a 106-amino-acid chain: Iron-sulfur cluster assembly protein CyaY (106 aa).

It belongs to the frataxin family.

Functionally, involved in iron-sulfur (Fe-S) cluster assembly. May act as a regulator of Fe-S biogenesis. The sequence is that of Iron-sulfur cluster assembly protein CyaY from Cronobacter sakazakii (strain ATCC BAA-894) (Enterobacter sakazakii).